Reading from the N-terminus, the 206-residue chain is Ras-related protein RABG3d (206 aa).

15–22 is a GTP binding site; it reads GDSGVGKT. An Effector region motif is present at residues 37 to 45; the sequence is YKATIGADF. GTP contacts are provided by residues 63-67, 125-128, and 158-159; these read DTAGQ, NKTD, and SA. Residues Cys-204 and Cys-206 are each lipidated (S-geranylgeranyl cysteine). Cysteine methyl ester is present on Cys-206.

The protein belongs to the small GTPase superfamily. Rab family.

The protein localises to the cell membrane. Its function is as follows. Intracellular vesicle trafficking and protein transport. This Arabidopsis thaliana (Mouse-ear cress) protein is Ras-related protein RABG3d (RABG3D).